Reading from the N-terminus, the 297-residue chain is HTH-type transcriptional regulator ArgP (297 aa).

Residues 4–60 enclose the HTH lysR-type domain; the sequence is PDYRTLQALDAVIRERGFERAAQKLCITQSAVSQRIKQLENTFGQPLLVRTVPPRPT. A DNA-binding region (H-T-H motif) is located at residues 21-40; the sequence is FERAAQKLCITQSAVSQRIK.

It belongs to the LysR transcriptional regulatory family. In terms of assembly, homodimer.

In terms of biological role, controls the transcription of genes involved in arginine and lysine metabolism. This chain is HTH-type transcriptional regulator ArgP, found in Cronobacter sakazakii (strain ATCC BAA-894) (Enterobacter sakazakii).